A 198-amino-acid polypeptide reads, in one-letter code: Bcl-2-like protein 11 (198 aa).

Positions 1–72 are disordered; that stretch reads MAKQPSDVSS…PLAPPASPGP (72 aa). Serine 69 is modified (phosphoserine; by MAPK). Phosphoserine occurs at positions 77, 87, and 94. A BH3 motif is present at residues 148–162; sequence IAQELRRIGDEFNAY.

The protein belongs to the Bcl-2 family. Forms heterodimers with a number of antiapoptotic Bcl-2 proteins, including MCL1, BCL2, BCL2L1 isoform Bcl-X(L), BCL2A1/BFL-1, BHRF1, and BCL2L2/BCLW. Does not heterodimerize with proapoptotic proteins such as BAD, BOK or BAK. Identified in a complex containing BCL2L11, DYNLL1 and BCL2L1 isoform Bcl-X(L); BH3 integrity is required for BCL2L1-binding. Interacts with YWHAZ. When phosphorylated, interacts with TRIM2; this interaction is associated with ubiquitination and degradation. Interacts with MCL1; may sequester BCL2L11 to prevent its pro-apoptotic activity. Interacts with GIMAP5. Interacts with BCL2L10/BCL-B. As to quaternary structure, interacts (when phosphorylated) with USP27X; the interaction leads to BCL2L11 deubiquitination and stabilization. Interacts with humanin; the interaction prevents BIM-induced apoptosis. In terms of assembly, does not interact with humanin. Interacts with BAX; the interaction may lead to BAX activation through conformational change. Does not interact with humanin. As to quaternary structure, interacts with BAX; the interaction may lead to BAX activation through conformational change. In terms of processing, phosphorylation at Ser-69 by MAPK1/MAPK3 leads to interaction with TRIM2 and polyubiquitination, followed by proteasomal degradation. Deubiquitination catalyzed by USP27X stabilizes the protein. Ubiquitination by TRIM2 following phosphorylation by MAPK1/MAPK3 leads to proteasomal degradation. Conversely, deubiquitination catalyzed by USP27X stabilizes the protein. In terms of tissue distribution, isoform BimEL, isoform BimL and isoform BimS are the predominant isoforms and are widely expressed with tissue-specific variation. Isoform Bim-gamma is most abundantly expressed in small intestine and colon, and in lower levels in spleen, prostate, testis, heart, liver and kidney.

It localises to the endomembrane system. The protein resides in the mitochondrion. In terms of biological role, induces apoptosis and anoikis. Isoform BimL is more potent than isoform BimEL. Isoform Bim-alpha1, isoform Bim-alpha2 and isoform Bim-alpha3 induce apoptosis, although less potent than isoform BimEL, isoform BimL and isoform BimS. Isoform Bim-gamma induces apoptosis. Isoform Bim-alpha3 induces apoptosis possibly through a caspase-mediated pathway. Isoform BimAC and isoform BimABC lack the ability to induce apoptosis. This chain is Bcl-2-like protein 11 (BCL2L11), found in Homo sapiens (Human).